We begin with the raw amino-acid sequence, 471 residues long: Galactolipase DONGLE, chloroplastic (471 aa).

The transit peptide at 1–88 (MAAKVFTQNP…PLSRVWREIQ (88 aa)) directs the protein to the chloroplast. The tract at residues 44 to 71 (SSSTMSPPISSSPLSLPSSSSSQAIPPS) is disordered. The short motif at 284 to 288 (GHSMG) is the GXSXG element. Ser-286 functions as the Acyl-ester intermediate in the catalytic mechanism. Residues Asp-349 and His-400 each act as charge relay system in the active site.

It belongs to the AB hydrolase superfamily. Lipase family. Expressed in leaves and seedlings. Not detected in flowers, siliques or roots.

It localises to the plastid. It is found in the chloroplast. The enzyme catalyses a 1,2-diacyl-3-O-(beta-D-galactosyl)-sn-glycerol + 2 H2O = 3-beta-D-galactosyl-sn-glycerol + 2 a fatty acid + 2 H(+). It carries out the reaction a 1,2-diacyl-sn-glycero-3-phosphocholine + H2O = a 2-acyl-sn-glycero-3-phosphocholine + a fatty acid + H(+). The catalysed reaction is a 1,2-diacyl-3-O-[alpha-D-galactosyl-(1-&gt;6)-beta-D-galactosyl]-sn-glycerol + H2O = acyl-3-O-[alpha-D-galactosyl-(1-&gt;6)-beta-D-galactosyl]-sn-glycerol + a fatty acid + H(+). Its function is as follows. Sn-1-specific phospholipase that releases free fatty acids from phosphatidylcholine. Has a higher galactolipase activity than phospholipase A1 activity when digalactosyldiacylglycerol (DGDG) is used as substrate. Catalyzes the initial step of jasmonic acid biosynthesis. Required for the biosynthesis of basal-level endogenous jasmonate in vegetative tissues. Regulates leaves growth. Not essential for jasmonate biosynthesis after wounding or upon pathogen infection. The chain is Galactolipase DONGLE, chloroplastic from Arabidopsis thaliana (Mouse-ear cress).